A 44-amino-acid chain; its full sequence is Large ribosomal subunit protein bL34 (44 aa).

It belongs to the bacterial ribosomal protein bL34 family.

This is Large ribosomal subunit protein bL34 from Ehrlichia ruminantium (strain Gardel).